A 177-amino-acid polypeptide reads, in one-letter code: Ubiquinol-cytochrome c reductase iron-sulfur subunit (177 aa).

Residues 18–38 traverse the membrane as a helical segment; that stretch reads IVLTASSVAAVGAACAFWPII. A Rieske domain is found at 88 to 175; that stretch reads ARAVKMSELI…YIFISDTKIR (88 aa). [2Fe-2S] cluster is bound by residues cysteine 120, histidine 122, cysteine 139, and histidine 142. Cysteine 125 and cysteine 141 are oxidised to a cystine.

Belongs to the Rieske iron-sulfur protein family. The main subunits of complex b-c1 are: cytochrome b, cytochrome c1 and the Rieske protein. The cofactor is [2Fe-2S] cluster.

The protein localises to the cell membrane. It carries out the reaction a quinol + 2 Fe(III)-[cytochrome c](out) = a quinone + 2 Fe(II)-[cytochrome c](out) + 2 H(+)(out). Its function is as follows. Component of the ubiquinol-cytochrome c reductase complex (complex III or cytochrome b-c1 complex), which is a respiratory chain that generates an electrochemical potential coupled to ATP synthesis. This is Ubiquinol-cytochrome c reductase iron-sulfur subunit (petA) from Rickettsia typhi (strain ATCC VR-144 / Wilmington).